Reading from the N-terminus, the 378-residue chain is Histidinol-phosphate aminotransferase 2 (378 aa).

At K240 the chain carries N6-(pyridoxal phosphate)lysine.

This sequence belongs to the class-II pyridoxal-phosphate-dependent aminotransferase family. Histidinol-phosphate aminotransferase subfamily. In terms of assembly, homodimer. It depends on pyridoxal 5'-phosphate as a cofactor.

The catalysed reaction is L-histidinol phosphate + 2-oxoglutarate = 3-(imidazol-4-yl)-2-oxopropyl phosphate + L-glutamate. It functions in the pathway amino-acid biosynthesis; L-histidine biosynthesis; L-histidine from 5-phospho-alpha-D-ribose 1-diphosphate: step 7/9. This Caulobacter vibrioides (strain ATCC 19089 / CIP 103742 / CB 15) (Caulobacter crescentus) protein is Histidinol-phosphate aminotransferase 2 (hisC2).